The following is a 203-amino-acid chain: Thymidylate kinase (203 aa).

An ATP-binding site is contributed by 10-17 (GIDGCGKT).

Belongs to the thymidylate kinase family.

It carries out the reaction dTMP + ATP = dTDP + ADP. Its function is as follows. Phosphorylation of dTMP to form dTDP in both de novo and salvage pathways of dTTP synthesis. This Thermoanaerobacter pseudethanolicus (strain ATCC 33223 / 39E) (Clostridium thermohydrosulfuricum) protein is Thymidylate kinase.